Here is a 59-residue protein sequence, read N- to C-terminus: Large ribosomal subunit protein bL32 (59 aa).

A disordered region spans residues 1-23 (MAVQQNKKSPSKRGMHRSHDFLT).

Belongs to the bacterial ribosomal protein bL32 family.

The protein is Large ribosomal subunit protein bL32 of Burkholderia multivorans (strain ATCC 17616 / 249).